The sequence spans 443 residues: Mitochondrial enolase superfamily member 1 (443 aa).

Substrate-binding positions include 24–26 (GAD) and Y34. S148 carries the post-translational modification Phosphoserine. Residue K220 participates in substrate binding. K222 functions as the Proton donor/acceptor in the catalytic mechanism. D250 contributes to the Mg(2+) binding site. Residues N252, E276, E305, 355-357 (HAG), and E386 each bind substrate. Mg(2+)-binding residues include E276 and E305. H355 is an active-site residue.

Belongs to the mandelate racemase/muconate lactonizing enzyme family. ENOSF1 subfamily. Mg(2+) serves as cofactor. Could be sumoylated.

The protein resides in the mitochondrion. It catalyses the reaction L-fuconate = 2-dehydro-3-deoxy-L-fuconate + H2O. In terms of biological role, plays a role in the catabolism of L-fucose, a sugar that is part of the carbohydrates that are attached to cellular glycoproteins. Catalyzes the dehydration of L-fuconate to 2-keto-3-deoxy-L-fuconate by the abstraction of the 2-proton to generate an enediolate intermediate that is stabilized by the magnesium ion. This chain is Mitochondrial enolase superfamily member 1 (ENOSF1), found in Homo sapiens (Human).